Consider the following 354-residue polypeptide: Alkanal monooxygenase alpha chain (354 aa).

This sequence belongs to the bacterial luciferase oxidoreductase family. Heterodimer of an alpha and a beta chain.

The enzyme catalyses a long-chain fatty aldehyde + FMNH2 + O2 = a long-chain fatty acid + hnu + FMN + H2O + 2 H(+). In terms of biological role, light-emitting reaction in luminous bacteria. The protein is Alkanal monooxygenase alpha chain (luxA) of Aliivibrio fischeri (Vibrio fischeri).